A 213-amino-acid polypeptide reads, in one-letter code: KDWNYFTFAQQWPIAVCAEHKSCFIPDSVVGWGIHGLWPSSDTESKGPENCNGSWPFDINNVMPLVPELKKYWPNLYPDTKANSFWEHEWSKHGTCATSLPATSNELKYFGMGLKLHAKYNISRILVNQGILPSKTAGYMINETEAAVKRELGVDAVIECVYDKEKTKKQLLYEISICLTKEFELISCNKKEVSETTCPRKEPFFYPPVHDNN.

His35 is an active-site residue. An intrachain disulfide couples Cys51 to Cys96. N-linked (GlcNAc...) asparagine glycosylation is present at Asn52. Residues Glu89 and His93 contribute to the active site. N-linked (GlcNAc...) asparagine glycosylation is found at Asn121 and Asn142. Intrachain disulfides connect Cys160/Cys198 and Cys178/Cys188.

Belongs to the RNase T2 family.

It is found in the secreted. In terms of biological role, releases mononucleotides from RNA in the order of 3'-GMP, 3'-AMP and 3'-UMP. The protein is Ribonuclease Oy of Magallana gigas (Pacific oyster).